The primary structure comprises 410 residues: 2-epi-5-epi-valiolone synthase (410 aa).

NAD(+) contacts are provided by residues Asp66, 97–100 (ETLK), 130–134 (GVLMD), 154–155 (TT), Lys167, Lys176, and 194–197 (FLAT). Residue Lys167 is part of the active site. 3 residues coordinate a divalent metal cation: Glu209, His280, and His296.

The protein belongs to the sugar phosphate cyclases superfamily. EEVS family. It depends on NAD(+) as a cofactor. The cofactor is Co(2+).

It catalyses the reaction D-sedoheptulose 7-phosphate = 2-epi-5-epi-valiolone + phosphate. Functionally, catalyzes the cyclization of D-sedoheptulose 7-phosphate to 2-epi-5-epi-valiolone. Involved in salbostatin biosynthesis. The chain is 2-epi-5-epi-valiolone synthase from Streptomyces albus (strain ATCC 21838 / DSM 41398 / FERM P-419 / JCM 4703 / NBRC 107858).